Reading from the N-terminus, the 252-residue chain is DNA repair protein RecO (252 aa).

It belongs to the RecO family.

In terms of biological role, involved in DNA repair and RecF pathway recombination. The chain is DNA repair protein RecO from Rhodospirillum rubrum (strain ATCC 11170 / ATH 1.1.1 / DSM 467 / LMG 4362 / NCIMB 8255 / S1).